The chain runs to 1081 residues: MASKTTFKDLQEIPDFPKEEENILKFWDEINAFKQQLEKTKDCPPFTFYDGPPFATGLPHYGNLLAGTIKDVVCRYASQNGKYVERRFGWDCHGLPVEYEIDKKLGITNRQEVLKMGVDKYNAECRSIVMRYAQEWRSIVNRFGRWVDFDNDYKTLDLKFMESVWWVFKQMFDKGLVYRGCKVMPYSNGCATVLSNFETQQNYKEVDDPSLFIAFKTAEDPKTKFIAWTTTPWTLPSNLALVINKDFDYVKVLDAKTQEHYILAECRLPELYKKDKDGYKILEKFKGSELVGREYEPLFPYFLSRKQDGCFRILAGDFVTADAGTGIVHCAPGFGDDDYKVSVANNIIKPDDPPVPVDENGHFTNVVSDFAGVYIKEADKLIRKNLKERGLLLVDSSFKHNYPFCWRSDTPLIYKAVHCWFIKVTALKDDLLANNKKAYWVPKFAQEGRFNNWLQNVSDWCFSRSRFWGNPIPIWVSEDFEEVVCIGSVEELKKLTGATEITDLHKDFIDHLTIPSQKGKGVLRRIDEVFDCWFESGSMPYGQQHYPFSMNEEEFSKRFPADFIGEGIDQTRGWFYTLNVISTALRNSNPYKNLIVNGIVLAADGKKMSKSKKNYDDPLLIASKYSVDAIRLYMINSPLVRAEEMSFKSEGVFAVKKDIFLPWYNAYKFLIQSITRWELATGKDYMFNEQLSVDTTKLTNPTDRWIIISCQNLINYVRIEMEKYHLYNVVPRLIHFLENLTNWYIRLNRNRLKGDYGLEEQETSLNVLFNVILNSTILMSPLVPFITESFYQNLRKVIPKGSSYLEESIHFLRIPTPKQELLDEKIERNFERMQNIINFARTLREKRKVSLKQPIMSLTVINQDQEFHDSLKDYIQYIEDEINTPSILHEINTANYVDLKAIPNHKLLGQKLGKEYNKDLKAAAGNLSAKDIETLKTTGSIDLVGKKLLLEDFTITQNYKKEYSSGDLELGGEGEVILLLNLAQDEKLKSKGLVREFTSNVQKTKKKTGLKVDDNIVIYYDVTKAPKLNAAIQSDLEAVQKVLKKPLVPLSEKNAALKIVENSLLTFQVDEESVTIEIAYA.

A 'HIGH' region motif is present at residues 53–63 (PFATGLPHYGN). Positions 607 to 611 (KMSKS) match the 'KMSKS' region motif. An ATP-binding site is contributed by K610.

This sequence belongs to the class-I aminoacyl-tRNA synthetase family.

The catalysed reaction is tRNA(Ile) + L-isoleucine + ATP = L-isoleucyl-tRNA(Ile) + AMP + diphosphate. The polypeptide is Isoleucine--tRNA ligase (ILSA) (Tetrahymena thermophila).